Consider the following 80-residue polypeptide: Conotoxin PnMKLT1-0121 (80 aa).

Residues Met-1–Ala-22 form the signal peptide. A propeptide spanning residues Asp-23 to Asn-49 is cleaved from the precursor. Disulfide bonds link Cys-52-Cys-67, Cys-59-Cys-71, and Cys-66-Cys-75.

It belongs to the conotoxin O1 superfamily. As to expression, expressed by the venom duct.

It localises to the secreted. This is Conotoxin PnMKLT1-0121 from Conus pennaceus (Feathered cone).